Reading from the N-terminus, the 471-residue chain is A-type ATP synthase subunit B (471 aa).

Belongs to the ATPase alpha/beta chains family. In terms of assembly, has multiple subunits with at least A(3), B(3), C, D, E, F, H, I and proteolipid K(x).

Its subcellular location is the cell membrane. In terms of biological role, component of the A-type ATP synthase that produces ATP from ADP in the presence of a proton gradient across the membrane. The B chain is a regulatory subunit. The protein is A-type ATP synthase subunit B of Halobacterium salinarum (strain ATCC 29341 / DSM 671 / R1).